The following is a 220-amino-acid chain: MTDDVRDVNTETTDATEVAEIDSAAGEAGDSATEAFDTDSATESTAQKGQRHRDLWRMQVTLKPVPVILILLMLISGGATGWLYLEQYRPDQQTDSGAARAAVAAASDGTIALLSYSPDTLDQDFATARSHLAGDFLSYYDQFTQQIVAPAAKQKSLKTTAKVVRAAVSELHPDSAVVLVFVDQSTTSKDSPNPSMAASSVMVTLAKVDGNWLITKFTPV.

A disordered region spans residues 1–50 (MTDDVRDVNTETTDATEVAEIDSAAGEAGDSATEAFDTDSATESTAQKGQ). The span at 39–48 (DSATESTAQK) shows a compositional bias: polar residues. Residues 65–85 (VPVILILLMLISGGATGWLYL) traverse the membrane as a helical segment.

It to M.tuberculosis Rv1363c.

It localises to the membrane. This is an uncharacterized protein from Mycobacterium tuberculosis (strain CDC 1551 / Oshkosh).